We begin with the raw amino-acid sequence, 388 residues long: Chaperone protein DnaJ (388 aa).

Residues 5–69 (DYYDVLGVDK…QKKAQYDQFG (65 aa)) form the J domain. The CR-type zinc finger occupies 145 to 227 (GKKTDITYTR…CHGKGTIDKK (83 aa)). Cys-158, Cys-161, Cys-175, Cys-178, Cys-201, Cys-204, Cys-215, and Cys-218 together coordinate Zn(2+). 4 CXXCXGXG motif repeats span residues 158–165 (CPTCDGSG), 175–182 (CDKCHGTG), 201–208 (CDKCGGRG), and 215–222 (CQTCHGKG).

The protein belongs to the DnaJ family. In terms of assembly, homodimer. Zn(2+) serves as cofactor.

Its subcellular location is the cytoplasm. Its function is as follows. Participates actively in the response to hyperosmotic and heat shock by preventing the aggregation of stress-denatured proteins and by disaggregating proteins, also in an autonomous, DnaK-independent fashion. Unfolded proteins bind initially to DnaJ; upon interaction with the DnaJ-bound protein, DnaK hydrolyzes its bound ATP, resulting in the formation of a stable complex. GrpE releases ADP from DnaK; ATP binding to DnaK triggers the release of the substrate protein, thus completing the reaction cycle. Several rounds of ATP-dependent interactions between DnaJ, DnaK and GrpE are required for fully efficient folding. Also involved, together with DnaK and GrpE, in the DNA replication of plasmids through activation of initiation proteins. The chain is Chaperone protein DnaJ from Lactobacillus gasseri (strain ATCC 33323 / DSM 20243 / BCRC 14619 / CIP 102991 / JCM 1131 / KCTC 3163 / NCIMB 11718 / NCTC 13722 / AM63).